Consider the following 302-residue polypeptide: Phospho-N-acetylmuramoyl-pentapeptide-transferase (302 aa).

Transmembrane regions (helical) follow at residues 1 to 21 (MIAA…NLFR), 42 to 62 (GTPT…GVLS), 67 to 87 (VILT…FLSI), 101 to 121 (ALLQ…ETAV), 123 to 143 (FFGI…IVIV), 154 to 174 (GLDG…WFFL), 178 to 198 (GFSE…LIFN), 204 to 224 (IFMG…VSVL), 229 to 249 (FYLI…ILQI), and 279 to 299 (IVAV…EVFG).

Belongs to the glycosyltransferase 4 family. MraY subfamily. It depends on Mg(2+) as a cofactor.

The protein localises to the cell inner membrane. The catalysed reaction is UDP-N-acetyl-alpha-D-muramoyl-L-alanyl-gamma-D-glutamyl-meso-2,6-diaminopimeloyl-D-alanyl-D-alanine + di-trans,octa-cis-undecaprenyl phosphate = di-trans,octa-cis-undecaprenyl diphospho-N-acetyl-alpha-D-muramoyl-L-alanyl-D-glutamyl-meso-2,6-diaminopimeloyl-D-alanyl-D-alanine + UMP. It participates in cell wall biogenesis; peptidoglycan biosynthesis. Catalyzes the initial step of the lipid cycle reactions in the biosynthesis of the cell wall peptidoglycan: transfers peptidoglycan precursor phospho-MurNAc-pentapeptide from UDP-MurNAc-pentapeptide onto the lipid carrier undecaprenyl phosphate, yielding undecaprenyl-pyrophosphoryl-MurNAc-pentapeptide, known as lipid I. This is Phospho-N-acetylmuramoyl-pentapeptide-transferase from Thermotoga neapolitana (strain ATCC 49049 / DSM 4359 / NBRC 107923 / NS-E).